An 889-amino-acid chain; its full sequence is MAAAASSSSAASAPRSGEDIREAFLNFYAERGHQRMASASLIPEDPTVLLTIAGMLPFKPVFLGQQQRPAPRATSSQKCIRTNDIENVGRTARHHTFFEMLGNFSFGDYFKQQAIEWAWELSTQVYGIDPRNLVVSVFREDDEAEQIWRDVVGVNTKRIIRMDEADNFWASGPTGPCGPCSEIYYDFKPELGDDGIDLEDDDRFIEFYNLVFMQYNRDAEGNLTPLANRNIDTGMGLERMAQILQKVPNNYETDLIFPLIQAAADLACVDYAQLDDKGKTSLKVIGDHSRAVTQLICDGVTASNLGRGYILRRLLRRVVRHGRLLGIDKPFLVTMGEAAIDLLKGAHPGVIERQEVILAELQREEARFLETLERGEKLLAEVLASRPTQISGAQAFELYDTYGFPLELTQEIAEEQRITVDLDGFEVAMEEQRQRAKAAAVSIDLTLQDAIEQVAGDQPATAFKGYDALDHPSTVQALVVNGAPASTASAGDVVQVVLDSTPFYGEGGGQVGDRGSLSGVDVIVAIDSVSRSRDVFVHSGRMERGHLAVGDTVNAQVDRSCRRRAQANHTATHLLQAALKQVVDPGIGQAGSLVDFDRLRFDFHCPTAVTAEQLAQIETLINGWIAEAHCLEVQEMAIDQAKAAGAVAMFGEKYADVVRVVDVPGVSMELCGGTHVANTAEIGLFKIVAESGVAAGIRRIEAVAGPAVLAYLNERDAVVKQLGDRFKAQPAEIVDRVTALQEELKATGKALAAAQAELAVAKAGALAAKAEAVGEFQLLVERLDGVEGAGLQGAAQSLADQLGDGAAVVIGGLPDPGDLGKVILVAAFGKQVIAAKLQAGKFIGGIAKQCGGGGGGRPNLAQAGGRDGAALPGALAAARSELAAALPQS.

4 residues coordinate Zn(2+): His569, His573, Cys671, and His675.

The protein belongs to the class-II aminoacyl-tRNA synthetase family. Requires Zn(2+) as cofactor.

It localises to the cytoplasm. It carries out the reaction tRNA(Ala) + L-alanine + ATP = L-alanyl-tRNA(Ala) + AMP + diphosphate. In terms of biological role, catalyzes the attachment of alanine to tRNA(Ala) in a two-step reaction: alanine is first activated by ATP to form Ala-AMP and then transferred to the acceptor end of tRNA(Ala). Also edits incorrectly charged Ser-tRNA(Ala) and Gly-tRNA(Ala) via its editing domain. This chain is Alanine--tRNA ligase, found in Parasynechococcus marenigrum (strain WH8102).